Here is a 115-residue protein sequence, read N- to C-terminus: UPF0738 protein SSP1780 (115 aa).

This sequence belongs to the UPF0738 family.

This chain is UPF0738 protein SSP1780, found in Staphylococcus saprophyticus subsp. saprophyticus (strain ATCC 15305 / DSM 20229 / NCIMB 8711 / NCTC 7292 / S-41).